Here is a 250-residue protein sequence, read N- to C-terminus: Phosphoribosylaminoimidazole-succinocarboxamide synthase (250 aa).

The protein belongs to the SAICAR synthetase family.

The enzyme catalyses 5-amino-1-(5-phospho-D-ribosyl)imidazole-4-carboxylate + L-aspartate + ATP = (2S)-2-[5-amino-1-(5-phospho-beta-D-ribosyl)imidazole-4-carboxamido]succinate + ADP + phosphate + 2 H(+). It functions in the pathway purine metabolism; IMP biosynthesis via de novo pathway; 5-amino-1-(5-phospho-D-ribosyl)imidazole-4-carboxamide from 5-amino-1-(5-phospho-D-ribosyl)imidazole-4-carboxylate: step 1/2. In Synechococcus sp. (strain CC9605), this protein is Phosphoribosylaminoimidazole-succinocarboxamide synthase.